The chain runs to 385 residues: Queuine tRNA-ribosyltransferase (385 aa).

Asp-93 acts as the Proton acceptor in catalysis. Residues 93–97 (DSGGF), Asp-147, Gln-191, and Gly-218 contribute to the substrate site. The RNA binding stretch occupies residues 249–255 (GVGKPED). The active-site Nucleophile is the Asp-268. The tract at residues 273–277 (TRNAR) is RNA binding; important for wobble base 34 recognition. Residues Cys-306, Cys-308, Cys-311, and His-337 each contribute to the Zn(2+) site.

This sequence belongs to the queuine tRNA-ribosyltransferase family. Homodimer. Within each dimer, one monomer is responsible for RNA recognition and catalysis, while the other monomer binds to the replacement base PreQ1. Zn(2+) serves as cofactor.

The catalysed reaction is 7-aminomethyl-7-carbaguanine + guanosine(34) in tRNA = 7-aminomethyl-7-carbaguanosine(34) in tRNA + guanine. It functions in the pathway tRNA modification; tRNA-queuosine biosynthesis. Its function is as follows. Catalyzes the base-exchange of a guanine (G) residue with the queuine precursor 7-aminomethyl-7-deazaguanine (PreQ1) at position 34 (anticodon wobble position) in tRNAs with GU(N) anticodons (tRNA-Asp, -Asn, -His and -Tyr). Catalysis occurs through a double-displacement mechanism. The nucleophile active site attacks the C1' of nucleotide 34 to detach the guanine base from the RNA, forming a covalent enzyme-RNA intermediate. The proton acceptor active site deprotonates the incoming PreQ1, allowing a nucleophilic attack on the C1' of the ribose to form the product. After dissociation, two additional enzymatic reactions on the tRNA convert PreQ1 to queuine (Q), resulting in the hypermodified nucleoside queuosine (7-(((4,5-cis-dihydroxy-2-cyclopenten-1-yl)amino)methyl)-7-deazaguanosine). The chain is Queuine tRNA-ribosyltransferase from Pasteurella multocida (strain Pm70).